An 841-amino-acid chain; its full sequence is MNPGQKQEHDQYPLHDTQFVPQQMDRNSPFADPYPEDQPPPSGYDHQPLLRDNAPSYPPDPFGQPGGYPPQSTMYPPQPMGPPSPNMRYGEAPRRQPRRYKTTRRVKLTHGNLILDCPVPTPYLQAVPIKDTKEFTHMRYTAATCDPADFASQGYTLRQPILQRNTELFIVLTMYNEDEILFARTMHGVMKNIAHLCSRVRSNVWEGPKAWEKVVVCIVSDGRKKIHPRTLSLLATLGVYQDGVAKNVVGDKPVTAHIYEYTTQLSVDPEMKFKGADKGMPPCQILFCLKENNQKKINSHRWFFQAFGPVINPNVCVLIDVGTRPGKTSIYHLWKAFDISSNIAGACGEIRAMSGTAGVALLNPLVAAQNFEYKMSNILDKPLESVFGYISVLPGAFSAYRFTALQNDENGHGPLEKYFLGESQHGADADIFTANMYLAEDRILCYELVAKKKANWVLHYVSSSYGETDVPDSVPEFISQRRRWLNGSFFAGCYALFHWRKVWASDHSFVRKLMFMFEDLYNTYNLIFSWFALGNFYLTFYILTSALGAESLDPKPFSANVASILHTILNYIYILLIIVQFILALGNRPQGSKWAYFGSMTFFAILMVYMMFATIWITVVGVQDAVANADGSFTAMLGESTFRNIIISIVSTYAMYFIASFLFFDPWHMFTSFIQYIFLSPSYTNILNIYAFCNTHDVSWGTKGDNTVSTDLGVVKSKKDGSGDTTVEVEVPTEQKDINEAYEEACVELTRQVEPEVSHRDAKTKQEDYYRSFRTRLVISWIISNLILVVLITNENILASFGTFEVRSTSYLGFVLWSVAGLSAIRFCGSGLYLIFRIFMG.

Residues 1-13 (MNPGQKQEHDQYP) are compositionally biased toward basic and acidic residues. The disordered stretch occupies residues 1-98 (MNPGQKQEHD…YGEAPRRQPR (98 aa)). Pro residues predominate over residues 76–85 (PPQPMGPPSP). A run of 9 helical transmembrane segments spans residues 302-322 (WFFQ…IDVG), 385-405 (SVFG…FTAL), 526-546 (LIFS…LTSA), 564-584 (ILHT…FILA), 602-622 (FFAI…VVGV), 644-664 (NIII…FLFF), 673-693 (FIQY…YAFC), 778-798 (VISW…ENIL), and 816-836 (LWSV…YLIF).

The protein belongs to the chitin synthase family.

Its subcellular location is the cell membrane. It catalyses the reaction [(1-&gt;4)-N-acetyl-beta-D-glucosaminyl](n) + UDP-N-acetyl-alpha-D-glucosamine = [(1-&gt;4)-N-acetyl-beta-D-glucosaminyl](n+1) + UDP + H(+). Its function is as follows. Polymerizes chitin, a structural polymer of the cell wall and septum, by transferring the sugar moiety of UDP-GlcNAc to the non-reducing end of the growing chitin polymer. This chain is Chitin synthase 1 (chs1), found in Phycomyces blakesleeanus (strain ATCC 8743b / DSM 1359 / FGSC 10004 / NBRC 33097 / NRRL 1555).